A 257-amino-acid polypeptide reads, in one-letter code: Imidazole glycerol phosphate synthase subunit HisF (257 aa).

Residues aspartate 12 and aspartate 131 contribute to the active site.

It belongs to the HisA/HisF family. Heterodimer of HisH and HisF.

It localises to the cytoplasm. It carries out the reaction 5-[(5-phospho-1-deoxy-D-ribulos-1-ylimino)methylamino]-1-(5-phospho-beta-D-ribosyl)imidazole-4-carboxamide + L-glutamine = D-erythro-1-(imidazol-4-yl)glycerol 3-phosphate + 5-amino-1-(5-phospho-beta-D-ribosyl)imidazole-4-carboxamide + L-glutamate + H(+). Its pathway is amino-acid biosynthesis; L-histidine biosynthesis; L-histidine from 5-phospho-alpha-D-ribose 1-diphosphate: step 5/9. In terms of biological role, IGPS catalyzes the conversion of PRFAR and glutamine to IGP, AICAR and glutamate. The HisF subunit catalyzes the cyclization activity that produces IGP and AICAR from PRFAR using the ammonia provided by the HisH subunit. The polypeptide is Imidazole glycerol phosphate synthase subunit HisF (Marinomonas sp. (strain MWYL1)).